The sequence spans 333 residues: MNQTLIQEILEVVEQAAIASAKLTGLGQKDEADAAAVEAMRLRMGKIEMKGKIVIGEGERDEAPMLYIGEEVGSGNGPGVDFAVDPCEGTNLCANNQRGSMAVLAASDTGGLFNAPDFYMNKLAAPPAAKGKVDIRNSATENLKILSDCLGLSIDELTVVVMDRTRHKDLIKEIRGCGAKVQPISDGDVQAAIACGFAGTGTHCLMGIGAAPEGVISAAAMRALGGHFQGQLVYDPAIAQTSEWADYTKEGNIKRLNEMGITDIDKIYEANELASGENVVFAGSGITDGLLFDGVKFERDCVRTSSLVISTLDSTARFTNTVHIKDGAKSISL.

The Mn(2+) site is built by aspartate 33, glutamate 57, aspartate 85, and glutamate 88. Substrate-binding positions include 88 to 90 (EGT), tyrosine 119, 164 to 166 (RTR), and 186 to 188 (DGD). Residue glutamate 213 participates in Mn(2+) binding.

The protein belongs to the FBPase class 2 family. As to quaternary structure, homotetramer. Mn(2+) is required as a cofactor.

It carries out the reaction beta-D-fructose 1,6-bisphosphate + H2O = beta-D-fructose 6-phosphate + phosphate. The enzyme catalyses D-sedoheptulose 1,7-bisphosphate + H2O = D-sedoheptulose 7-phosphate + phosphate. It functions in the pathway carbohydrate biosynthesis; Calvin cycle. In terms of biological role, catalyzes the hydrolysis of fructose 1,6-bisphosphate (Fru 1,6-P2) and sedoheptulose 1,7-bisphosphate (Sed 1,7-P2) to fructose 6-phosphate and sedoheptulose 7-phosphate, respectively. This is D-fructose 1,6-bisphosphatase class 2/sedoheptulose 1,7-bisphosphatase from Prochlorococcus marinus (strain MIT 9301).